The sequence spans 415 residues: Probable N-acetyl-gamma-glutamyl-phosphate reductase, chloroplastic (415 aa).

Residues 1–74 (MGSTALGGGA…SGVKSGEEVR (74 aa)) constitute a chloroplast transit peptide. The segment at 48–68 (VRASVASSPQKQHSPKTSGVK) is disordered. The span at 56–67 (PQKQHSPKTSGV) shows a compositional bias: polar residues. Residue Cys-219 is part of the active site.

The protein belongs to the NAGSA dehydrogenase family. Type 1 subfamily. In terms of assembly, homotetramer.

It localises to the plastid. The protein localises to the chloroplast. The enzyme catalyses N-acetyl-L-glutamate 5-semialdehyde + phosphate + NADP(+) = N-acetyl-L-glutamyl 5-phosphate + NADPH + H(+). It functions in the pathway amino-acid biosynthesis; L-arginine biosynthesis; N(2)-acetyl-L-ornithine from L-glutamate: step 3/4. The sequence is that of Probable N-acetyl-gamma-glutamyl-phosphate reductase, chloroplastic from Oryza sativa subsp. japonica (Rice).